The following is a 264-amino-acid chain: Thymidylate synthase 2 (264 aa).

Arg21 serves as a coordination point for dUMP. Residue His51 coordinates (6R)-5,10-methylene-5,6,7,8-tetrahydrofolate. Residue 126–127 coordinates dUMP; the sequence is RR. Residue Cys146 is the Nucleophile of the active site. Residues 166–169, Asn177, and 207–209 contribute to the dUMP site; these read RSAD and HIY. Asp169 provides a ligand contact to (6R)-5,10-methylene-5,6,7,8-tetrahydrofolate. Ser263 serves as a coordination point for (6R)-5,10-methylene-5,6,7,8-tetrahydrofolate.

The protein belongs to the thymidylate synthase family. Bacterial-type ThyA subfamily. As to quaternary structure, homodimer.

The protein localises to the cytoplasm. It catalyses the reaction dUMP + (6R)-5,10-methylene-5,6,7,8-tetrahydrofolate = 7,8-dihydrofolate + dTMP. It participates in pyrimidine metabolism; dTTP biosynthesis. Its function is as follows. Catalyzes the reductive methylation of 2'-deoxyuridine-5'-monophosphate (dUMP) to 2'-deoxythymidine-5'-monophosphate (dTMP) while utilizing 5,10-methylenetetrahydrofolate (mTHF) as the methyl donor and reductant in the reaction, yielding dihydrofolate (DHF) as a by-product. This enzymatic reaction provides an intracellular de novo source of dTMP, an essential precursor for DNA biosynthesis. The sequence is that of Thymidylate synthase 2 from Bacillus spizizenii (strain ATCC 23059 / NRRL B-14472 / W23) (Bacillus subtilis subsp. spizizenii).